The following is a 262-amino-acid chain: Glutamate racemase (262 aa).

Residues 5 to 6 (DS) and 37 to 38 (YG) contribute to the substrate site. Residue Cys-69 is the Proton donor/acceptor of the active site. 70 to 71 (NT) is a substrate binding site. Cys-181 serves as the catalytic Proton donor/acceptor. 182–183 (TH) is a substrate binding site.

Belongs to the aspartate/glutamate racemases family.

The enzyme catalyses L-glutamate = D-glutamate. It participates in cell wall biogenesis; peptidoglycan biosynthesis. Provides the (R)-glutamate required for cell wall biosynthesis. The chain is Glutamate racemase from Buchnera aphidicola subsp. Acyrthosiphon pisum (strain 5A).